We begin with the raw amino-acid sequence, 426 residues long: Histidine--tRNA ligase (426 aa).

This sequence belongs to the class-II aminoacyl-tRNA synthetase family.

It localises to the cytoplasm. The enzyme catalyses tRNA(His) + L-histidine + ATP = L-histidyl-tRNA(His) + AMP + diphosphate + H(+). The sequence is that of Histidine--tRNA ligase from Sulfurisphaera tokodaii (strain DSM 16993 / JCM 10545 / NBRC 100140 / 7) (Sulfolobus tokodaii).